A 181-amino-acid polypeptide reads, in one-letter code: Protoporphyrinogen IX dehydrogenase [quinone] (181 aa).

The Flavodoxin-like domain occupies 3-172 (TLILFSTRDG…QVANFAREIA (170 aa)). FMN contacts are provided by residues 9–13 (TRDGQ) and 84–152 (FYSV…ETDT).

This sequence belongs to the HemG family. FMN is required as a cofactor.

It localises to the cell inner membrane. The enzyme catalyses protoporphyrinogen IX + 3 a menaquinone = protoporphyrin IX + 3 a menaquinol. It catalyses the reaction protoporphyrinogen IX + 3 a ubiquinone = protoporphyrin IX + 3 a ubiquinol. It carries out the reaction protoporphyrinogen IX + 3 a quinone = protoporphyrin IX + 3 a quinol. It participates in porphyrin-containing compound metabolism; protoporphyrin-IX biosynthesis; protoporphyrin-IX from protoporphyrinogen-IX: step 1/1. Functionally, catalyzes the 6-electron oxidation of protoporphyrinogen IX to form protoporphyrin IX; under anaerobic conditions uses menaquinone as an electron acceptor, under aerobic condition uses ubiquinone as an electron acceptor. The chain is Protoporphyrinogen IX dehydrogenase [quinone] from Escherichia coli O157:H7.